We begin with the raw amino-acid sequence, 258 residues long: Triosephosphate isomerase (258 aa).

Substrate is bound at residue 9–11 (NWK). His-95 (electrophile) is an active-site residue. The Proton acceptor role is filled by Glu-167. Substrate-binding residues include Gly-173 and Ser-212.

It belongs to the triosephosphate isomerase family. As to quaternary structure, homodimer.

It is found in the cytoplasm. The enzyme catalyses D-glyceraldehyde 3-phosphate = dihydroxyacetone phosphate. It participates in carbohydrate biosynthesis; gluconeogenesis. Its pathway is carbohydrate degradation; glycolysis; D-glyceraldehyde 3-phosphate from glycerone phosphate: step 1/1. Its function is as follows. Involved in the gluconeogenesis. Catalyzes stereospecifically the conversion of dihydroxyacetone phosphate (DHAP) to D-glyceraldehyde-3-phosphate (G3P). The protein is Triosephosphate isomerase of Blochmanniella pennsylvanica (strain BPEN).